Consider the following 108-residue polypeptide: PTS system fructose-like EIIB component 1 (108 aa).

Residues 1–101 (MSKKLIALCA…AAGIIKEIEE (101 aa)) enclose the PTS EIIB type-2 domain. Cysteine 11 acts as the Phosphocysteine intermediate in catalysis. Cysteine 11 is subject to Phosphocysteine; by EIIA.

It is found in the cytoplasm. It catalyses the reaction D-fructose(out) + N(pros)-phospho-L-histidyl-[protein] = D-fructose 1-phosphate(in) + L-histidyl-[protein]. Its function is as follows. The phosphoenolpyruvate-dependent sugar phosphotransferase system (sugar PTS), a major carbohydrate active transport system, catalyzes the phosphorylation of incoming sugar substrates concomitantly with their translocation across the cell membrane. The enzyme II FryABC PTS system is involved in fructose transport. The sequence is that of PTS system fructose-like EIIB component 1 (fryB) from Shigella flexneri.